Reading from the N-terminus, the 275-residue chain is NH(3)-dependent NAD(+) synthetase (275 aa).

50-57 (GISGGVDS) contributes to the ATP binding site. Position 56 (Asp-56) interacts with Mg(2+). Arg-147 contacts deamido-NAD(+). Thr-167 is a binding site for ATP. Residue Glu-172 coordinates Mg(2+). Lys-180 and Asp-187 together coordinate deamido-NAD(+). Residues Lys-196 and Thr-218 each contribute to the ATP site. A deamido-NAD(+)-binding site is contributed by 267-268 (HK).

Belongs to the NAD synthetase family. Homodimer.

The enzyme catalyses deamido-NAD(+) + NH4(+) + ATP = AMP + diphosphate + NAD(+) + H(+). Its pathway is cofactor biosynthesis; NAD(+) biosynthesis; NAD(+) from deamido-NAD(+) (ammonia route): step 1/1. Functionally, catalyzes the ATP-dependent amidation of deamido-NAD to form NAD. Uses ammonia as a nitrogen source. In Ectopseudomonas mendocina (strain ymp) (Pseudomonas mendocina), this protein is NH(3)-dependent NAD(+) synthetase.